The sequence spans 167 residues: Small ribosomal subunit protein uS5 (167 aa).

An S5 DRBM domain is found at 12–75 (LQEKLIAVNR…EKARRNMVTV (64 aa)).

The protein belongs to the universal ribosomal protein uS5 family. In terms of assembly, part of the 30S ribosomal subunit. Contacts proteins S4 and S8.

With S4 and S12 plays an important role in translational accuracy. Its function is as follows. Located at the back of the 30S subunit body where it stabilizes the conformation of the head with respect to the body. The sequence is that of Small ribosomal subunit protein uS5 from Shewanella sp. (strain W3-18-1).